Consider the following 4561-residue polypeptide: StAR-related lipid transfer protein 9 (4561 aa).

The Kinesin motor domain occupies 3–384 (NVQVAVRVRP…MRYASNAKNI (382 aa)). Residue 103 to 110 (GQTGSGKT) coordinates ATP. Positions 307–321 (SSGGDSGVPSTTSGA) are enriched in low complexity. The tract at residues 307–330 (SSGGDSGVPSTTSGASSGGGPARR) is disordered. Positions 482–533 (TKIGRIDSDQEQDIVLQGQWIERDHCTITSTCGVVILRPTQGARCTVNGREV) constitute an FHA domain. 3 disordered regions span residues 784-805 (SRAP…RRSR), 873-1064 (SRWR…DTES), and 1092-1153 (WNLP…PSDS). Polar residues-rich tracts occupy residues 789-805 (WASS…RRSR), 884-903 (ASTQ…SQEI), 911-920 (CQMSSQGQST), and 939-948 (RWASVNTKTG). 2 stretches are compositionally biased toward basic and acidic residues: residues 1046–1060 (RPIK…RDLS) and 1124–1135 (SRGEYSMKDHGH). Ser-1164 carries the phosphoserine modification. Disordered stretches follow at residues 1288–1392 (PSGD…SDMS), 1700–1767 (REAW…EEEN), 1959–1980 (ECKA…EEKQ), 2077–2120 (TNAT…ADRL), 2320–2356 (LATG…LGGS), 2384–2427 (VSTS…SSLD), 2439–2467 (FLLQ…LPNS), 2622–2656 (KPRQ…DPLP), 2712–2735 (KDSI…SEKI), 2777–2800 (TGLE…GNVG), 3002–3067 (RSVE…PGTL), 3185–3207 (AQTE…REQL), 3246–3286 (ELNL…TSLK), 3645–3703 (EGAA…LRPE), 3790–3847 (SDLA…PQQS), and 3863–3913 (QPKT…GRTT). Residues 1300–1321 (DIHEIQPHDEKPKHWLSIEEPK) show a composition bias toward basic and acidic residues. Polar residues-rich tracts occupy residues 1328-1360 (LPQS…SQGL) and 1722-1741 (PKLS…TTTK). Composition is skewed to basic and acidic residues over residues 1754–1767 (ELGK…EEEN) and 1970–1980 (QSKEEPLEEKQ). The segment covering 2077-2091 (TNATSNNNTQIQKLT) has biased composition (polar residues). The segment covering 2096–2110 (RSREYVQTRESESEH) has biased composition (basic and acidic residues). 2 stretches are compositionally biased toward polar residues: residues 2333–2351 (TRSS…TTHT) and 2399–2408 (TSTGSTTQEA). Residues 2414-2463 (EATVQKERKNSSLDRISRQAEKRVSFLLQEDSNQGEEERQKAEETSEDQQ) are a coiled coil. The segment covering 2417–2427 (VQKERKNSSLD) has biased composition (basic and acidic residues). Residues 2634–2647 (DSSEVIEKRKEASR) show a composition bias toward basic and acidic residues. Composition is skewed to polar residues over residues 3039-3054 (LKNN…SQTM) and 3187-3199 (TEPS…THSQ). Pro residues predominate over residues 3689 to 3700 (PASPDGSPPPSL). Over residues 3812–3835 (DSQRAESLDREGKSPLGKSSERLL) the composition is skewed to basic and acidic residues. Polar residues predominate over residues 3863 to 3874 (QPKTTTGDQSKL). Residues 4185–4224 (SDIELMLQEYRRAREEAKVEIAQARDRLKERTEQEKMRIR) adopt a coiled-coil conformation. The 218-residue stretch at 4344–4561 (PYQDLAKHIV…VAKLASFLRS (218 aa)) folds into the START domain.

The protein belongs to the TRAFAC class myosin-kinesin ATPase superfamily. Kinesin family. In terms of assembly, interacts with ATAD3A.

It is found in the cytoplasm. It localises to the cytoskeleton. The protein resides in the microtubule organizing center. The protein localises to the centrosome. Its subcellular location is the centriole. It is found in the nucleus. Microtubule-dependent motor protein required for spindle pole assembly during mitosis. Required to stabilize the pericentriolar material (PCM). The sequence is that of StAR-related lipid transfer protein 9 (Stard9) from Mus musculus (Mouse).